Consider the following 262-residue polypeptide: Acyl-[acyl-carrier-protein]--UDP-N-acetylglucosamine O-acyltransferase (262 aa).

It belongs to the transferase hexapeptide repeat family. LpxA subfamily. In terms of assembly, homotrimer.

Its subcellular location is the cytoplasm. It carries out the reaction a (3R)-hydroxyacyl-[ACP] + UDP-N-acetyl-alpha-D-glucosamine = a UDP-3-O-[(3R)-3-hydroxyacyl]-N-acetyl-alpha-D-glucosamine + holo-[ACP]. It functions in the pathway glycolipid biosynthesis; lipid IV(A) biosynthesis; lipid IV(A) from (3R)-3-hydroxytetradecanoyl-[acyl-carrier-protein] and UDP-N-acetyl-alpha-D-glucosamine: step 1/6. Its function is as follows. Involved in the biosynthesis of lipid A, a phosphorylated glycolipid that anchors the lipopolysaccharide to the outer membrane of the cell. The chain is Acyl-[acyl-carrier-protein]--UDP-N-acetylglucosamine O-acyltransferase from Shigella flexneri serotype 5b (strain 8401).